The chain runs to 508 residues: Aldehyde dehydrogenase family 7 member A1 (508 aa).

G244 to G249 lines the NAD(+) pocket. Residue E266 is the Proton acceptor of the active site. The active-site Nucleophile is C300.

This sequence belongs to the aldehyde dehydrogenase family. In terms of assembly, homotetramer.

It catalyses the reaction an aldehyde + NAD(+) + H2O = a carboxylate + NADH + 2 H(+). Its function is as follows. May play a role in fruit development. This is Aldehyde dehydrogenase family 7 member A1 from Malus domestica (Apple).